The sequence spans 432 residues: Trigger factor (432 aa).

The 86-residue stretch at 161 to 246 (EDRVTIDFTG…LKKVEERELP (86 aa)) folds into the PPIase FKBP-type domain.

It belongs to the FKBP-type PPIase family. Tig subfamily. In terms of assembly, homodimer and monomer. In vivo most of the ribosomes are in complex with monomeric TF. Uncomplexed TF, however, is in a monomer-dimer equilibrium with approximately two thirds of TF existing in a dimeric state.

It localises to the cytoplasm. The enzyme catalyses [protein]-peptidylproline (omega=180) = [protein]-peptidylproline (omega=0). In terms of biological role, involved in protein export. Acts as a chaperone by maintaining the newly synthesized protein in an open conformation. Functions as a peptidyl-prolyl cis-trans isomerase. The sequence is that of Trigger factor from Escherichia coli O127:H6 (strain E2348/69 / EPEC).